The chain runs to 139 residues: Putative pre-16S rRNA nuclease (139 aa).

This sequence belongs to the YqgF nuclease family.

It localises to the cytoplasm. Its function is as follows. Could be a nuclease involved in processing of the 5'-end of pre-16S rRNA. This Pectobacterium atrosepticum (strain SCRI 1043 / ATCC BAA-672) (Erwinia carotovora subsp. atroseptica) protein is Putative pre-16S rRNA nuclease.